Reading from the N-terminus, the 1209-residue chain is Calcium-activated potassium channel subunit alpha-1 (1209 aa).

Over residues Met1–Gly23 the composition is skewed to gly residues. A disordered region spans residues Met1–Val61. At Met1–Met86 the chain is on the extracellular side. Over residues Arg25–Ala39 the composition is skewed to polar residues. The span at Ser40–Ser60 shows a compositional bias: low complexity. A helical transmembrane segment spans residues Trp87–Leu107. Residues Trp108–Arg178 lie on the Cytoplasmic side of the membrane. 3 S-palmitoyl cysteine lipidation sites follow: Cys118, Cys119, and Cys121. A helical membrane pass occupies residues Val179–Ser199. The Extracellular segment spans residues Ser200 to Thr214. A helical transmembrane segment spans residues Leu215–Ala235. Residues Ala236 to Lys239 are Cytoplasmic-facing. A helical transmembrane segment spans residues Leu240 to Val260. At Ser261–Leu264 the chain is on the extracellular side. The chain crosses the membrane as a helical; Voltage-sensor span at residues Asn265 to Ile285. The Cytoplasmic segment spans residues Leu286–Leu300. Residues Val301–Val321 form a helical membrane-spanning segment. Residues Glu322–Gln335 are Extracellular-facing. The pore-forming intramembrane region spans Ala336–Val358. The Selectivity for potassium signature appears at Thr352 to Tyr355. Residues Tyr359 to Leu367 lie on the Extracellular side of the membrane. Residues Phe368–Ile388 form a helical membrane-spanning segment. Topologically, residues Glu389–Arg1209 are cytoplasmic. The region spanning Arg407–Ile549 is the RCK N-terminal 1 domain. Mg(2+) contacts are provided by Glu439, Gln462, and Glu464. The tract at residues Leu556–Phe576 is segment S7. A segment S8 region spans residues Leu613–Ile633. Asp670 is modified (phosphothreonine). Lys672 carries the post-translational modification Phosphoserine. Positions Cys681–His685 are heme-binding motif. Residues Glu703–Arg733 are disordered. Thr709 bears the Phosphothreonine mark. Phosphoserine is present on residues Ser711, Ser724, and Ser728. The tract at residues Val783–Leu803 is segment S9. The RCK N-terminal 2 domain occupies Ser785–Pro929. Thr916 carries the post-translational modification Phosphothreonine. Phosphoserine is present on residues Ser924 and Ser928. The Calcium bowl motif lies at Thr976–Glu998. Ca(2+) is bound by residues Gln985, Asp988, Asp991, and Asp993. Positions Phe1005–Phe1025 are segment S10. Low complexity predominate over residues Arg1159–Ser1184. The interval Arg1159–Arg1209 is disordered. A compositionally biased stretch (basic and acidic residues) spans Lys1193 to Arg1209. Ser1194 and Ser1197 each carry phosphoserine.

It belongs to the potassium channel family. Calcium-activated (TC 1.A.1.3) subfamily. KCa1.1/KCNMA1 sub-subfamily. Homotetramer; which constitutes the calcium-activated potassium channel. Interacts with beta subunits KCNMB1, KCNMB2, KCNMB3 and KCNMB4. Interacts with gamma subunits LRRC26, LRRC38, LRRC52 and LRRC55. Beta and gamma subunits are accessory, and modulate its activity. Interacts with RAB11B. In terms of processing, phosphorylated. Phosphorylation by kinases such as PKA and/or PKG. In smooth muscles, phosphorylation affects its activity. Palmitoylation by ZDHHC22 and ZDHHC23 within the intracellular linker between the S0 and S1 transmembrane domains regulates localization to the plasma membrane. Depalmitoylated by LYPLA1 and LYPLAL1, leading to retard exit from the trans-Golgi network.

It localises to the cell membrane. The catalysed reaction is K(+)(in) = K(+)(out). With respect to regulation, ethanol and carbon monoxide-bound heme increase channel activation. Heme inhibits channel activation. Potassium channel activated by both membrane depolarization or increase in cytosolic Ca(2+) that mediates export of K(+). It is also activated by the concentration of cytosolic Mg(2+). Its activation dampens the excitatory events that elevate the cytosolic Ca(2+) concentration and/or depolarize the cell membrane. It therefore contributes to repolarization of the membrane potential. Plays a key role in controlling excitability in a number of systems, such as regulation of the contraction of smooth muscle, the tuning of hair cells in the cochlea, regulation of transmitter release, and innate immunity. In smooth muscles, its activation by high level of Ca(2+), caused by ryanodine receptors in the sarcoplasmic reticulum, regulates the membrane potential. In cochlea cells, its number and kinetic properties partly determine the characteristic frequency of each hair cell and thereby helps to establish a tonotopic map. Kinetics of KCNMA1 channels are determined by alternative splicing, phosphorylation status and its combination with modulating beta subunits. Highly sensitive to both iberiotoxin (IbTx) and charybdotoxin (CTX). Its function is as follows. Potassium channel activated by both membrane depolarization or increase in cytosolic Ca(2+) that mediates export of K(+). This is Calcium-activated potassium channel subunit alpha-1 (Kcnma1) from Mus musculus (Mouse).